The sequence spans 163 residues: MALNLQDKQAIVAEVNEAAKGALSAVIADSRGVTVDKMTELRKTAREAGVSMRVVRNTLLRRAVEGTEFECLTDTFTGPTLIAFSNEHPGAAARLFKEFAKANDKFEIKGAAFEGKIQDVDFLATLPTYDEAIARLMGTIKEAAAGKLVRTFAALRDKLQEAA.

Belongs to the universal ribosomal protein uL10 family. Part of the ribosomal stalk of the 50S ribosomal subunit. The N-terminus interacts with L11 and the large rRNA to form the base of the stalk. The C-terminus forms an elongated spine to which L12 dimers bind in a sequential fashion forming a multimeric L10(L12)X complex.

Its function is as follows. Forms part of the ribosomal stalk, playing a central role in the interaction of the ribosome with GTP-bound translation factors. The sequence is that of Large ribosomal subunit protein uL10 from Mannheimia succiniciproducens (strain KCTC 0769BP / MBEL55E).